A 486-amino-acid chain; its full sequence is MNSMFCSELQQALPQMSEDVAVTAQTILNGTPPHNHFRKEWLAGAAGTTTPTTTSGGQMMTLSPPAGDGPGSAGSMAPESTSSLSDLSGDAEGVWSIDIDQAFQEALAIYPPCGRRKIIISDEGKMYGRNELIARYIKLRCGKTRTRKQVSSHIQVLARKKLRDEQAKKKGDIPSLLQQASPPGGVKSPSAVVFPPVSAAVAAITEISPQSSYSSIVPKVETDQISQQLFKSLPLWSFQQTPGLPIGMDLSQLVFQQSSPDKTVSPVKSEVVEETKPIASSQLTLHSFSAYVKCNKTSLRTELVKIENTLEKDDIDISVFYEKYPKLLRELFEKSEKKDVFFLAKCWANINVSDDVQNCQYAVDSFYSSREKFQLKVSTMACSFGNQAVEKIEQYFPIEFDGSYSFILNNSPMCDYMVKFIAELKKLNVIETMNNVLENFTVLQIVTNSETDELLMVLCFVFEVSQEPEPSCSVYRLIDGGGDSDE.

Residues 47 to 57 (GTTTPTTTSGG) are compositionally biased toward low complexity. A disordered region spans residues 47–87 (GTTTPTTTSGGQMMTLSPPAGDGPGSAGSMAPESTSSLSDL). The segment at residues 88 to 164 (SGDAEGVWSI…QVLARKKLRD (77 aa)) is a DNA-binding region (TEA). Residues 165-188 (EQAKKKGDIPSLLQQASPPGGVKS) form a disordered region.

As to quaternary structure, interacts (via N-terminus) with egl-46 (via C-terminus); the interaction is direct; the interaction may regulate transcription. Interacts with yap-1 (via WW domain); the interaction may regulate transcription. In terms of tissue distribution, expressed in HSN neurons in embryos and in the FLP neurons from the L1 stage through to adults. Not expressed in touch cells. Also expressed in larval hypodermis, intestine, pharyngeal muscle and other neurons. In adults expression is lost from some neurons, is weaker in the hypodermis but remains in the intestine. Expressed in HOB neuron, ray neurons RnA and RnB, and the ray structural cell, Rnst; rays are male-specific genital sensilla (simple sense organs).

It localises to the nucleus. Transcription factor. Binds to DNA sequence motif 5'-CATNNNNAAATGCAT-3' as a heterodimer with egl-46. Represses expression of genes involved in differentiation of touch receptor neurons (TRN), probably acting as a heterodimer with egl-46, perhaps by occupying similar cis-regulatory elements as an unc-86/mec-3 heterodimer. Plays a role in cell fate specification of neurons, including the hook neuron HOB, and touch receptor neurons. Involved in male mating behavior, acting in concert with egl-46, via modulation of expression of polycystins lov-1 and pkd-2, homeodomain protein ceh-26, and neuropeptide-like protein nlp-8. Acts upstream of egl-46 to prevent touch cell differentiation in FLP neurons. Plays a role in neuron differentiation by repressing the expression of zag-1 in FLP neurons, probably acting as a heterodimer with egl-46; because zag-1 represses expression of egl-46 and egl-44, together these proteins form a bistable, negative-feedback loop that regulates the choice between neuronal fates. Also promotes HSN neuron development. In association with egl-46, regulates cell cycle exit in the neuronal Q cell lineage. Plays a role in specifying commissural dendrites of the PVD nociceptive neurons, acting in concert with egl-46. May be involved in thermal stress response downstream of yap-1. In Caenorhabditis elegans, this protein is Transcription enhancer factor-like protein egl-44 (egl-44).